The following is a 463-amino-acid chain: Xanthone prenyltransferase B (463 aa).

Belongs to the tryptophan dimethylallyltransferase family.

The protein operates within secondary metabolite biosynthesis. Mn(2+) and Co(2+) strongly enhance prenylation activity. Its function is as follows. Dehydrogenase involved in the conversion of monodictyphenone to the prenyl xanthones such as emericellin, shamixanthone and epishamixanthone. Monodictyphenone is first converted to variecoxanthone A via a paeciloxanthone intermediate by the consecutive actions of the FAD-dependent monooxygenase mdpD and the xanthone prenyltransferase xptB. XptB catalyzes regular O-prenylation at the hydroxy group of C-7 of the xanthone ring. Variecoxanthone A is further prenylated to emericellin by xptA before being reduced to shamixanthone and epishamixanthone by the dehydrogenase xptC. The chain is Xanthone prenyltransferase B from Emericella nidulans (strain FGSC A4 / ATCC 38163 / CBS 112.46 / NRRL 194 / M139) (Aspergillus nidulans).